A 371-amino-acid chain; its full sequence is UDP-N-acetylglucosamine--N-acetylmuramyl-(pentapeptide) pyrophosphoryl-undecaprenol N-acetylglucosamine transferase (371 aa).

UDP-N-acetyl-alpha-D-glucosamine is bound by residues 15–17 (TGG), asparagine 126, arginine 172, serine 199, isoleucine 256, 275–280 (ALTVSE), and glutamine 301.

It belongs to the glycosyltransferase 28 family. MurG subfamily.

Its subcellular location is the cell inner membrane. It carries out the reaction di-trans,octa-cis-undecaprenyl diphospho-N-acetyl-alpha-D-muramoyl-L-alanyl-D-glutamyl-meso-2,6-diaminopimeloyl-D-alanyl-D-alanine + UDP-N-acetyl-alpha-D-glucosamine = di-trans,octa-cis-undecaprenyl diphospho-[N-acetyl-alpha-D-glucosaminyl-(1-&gt;4)]-N-acetyl-alpha-D-muramoyl-L-alanyl-D-glutamyl-meso-2,6-diaminopimeloyl-D-alanyl-D-alanine + UDP + H(+). It functions in the pathway cell wall biogenesis; peptidoglycan biosynthesis. Functionally, cell wall formation. Catalyzes the transfer of a GlcNAc subunit on undecaprenyl-pyrophosphoryl-MurNAc-pentapeptide (lipid intermediate I) to form undecaprenyl-pyrophosphoryl-MurNAc-(pentapeptide)GlcNAc (lipid intermediate II). In Francisella tularensis subsp. tularensis (strain WY96-3418), this protein is UDP-N-acetylglucosamine--N-acetylmuramyl-(pentapeptide) pyrophosphoryl-undecaprenol N-acetylglucosamine transferase.